Reading from the N-terminus, the 619-residue chain is Mitogen-activated protein kinase kinase kinase 2 (619 aa).

4 disordered regions span residues 25-44 (LSLQ…QNDV), 126-168 (QATN…PPPG), 201-245 (LDPL…DNHQ), and 289-355 (RTQG…APTN). S26 is subject to Phosphoserine. The region spanning 43 to 122 (DVRVKFEHRG…KSLKILLVVN (80 aa)) is the PB1 domain. Over residues 126–143 (QATNLEPSPSPEDLNNTP) the composition is skewed to polar residues. Phosphoserine occurs at positions 153 and 164. Over residues 203–219 (PLSLSSPENSGSGSCPS) the composition is skewed to low complexity. Phosphoserine occurs at positions 239, 297, 311, 331, 344, and 349. A compositionally biased stretch (polar residues) spans 290–299 (TQGTSFRSPV). Residues 300–315 (SFSPTDHSLSTSSGSS) are compositionally biased toward low complexity. Residues 322–332 (DDSRIRRRGSD) are compositionally biased toward basic and acidic residues. The span at 336 to 346 (PTLTVTDISPP) shows a compositional bias: polar residues. In terms of domain architecture, Protein kinase spans 356 to 616 (WRLGKLLGQG…AEELLRHMFV (261 aa)). ATP-binding positions include 362 to 370 (LGQGAFGRV) and K385. The active-site Proton acceptor is D483.

The protein belongs to the protein kinase superfamily. STE Ser/Thr protein kinase family. MAP kinase kinase kinase subfamily. In terms of assembly, self-associates. Binds both upstream activators and downstream substrates in multimolecular complexes. Interacts (via the kinase catalytic domain) with STK38. Interacts with XIAP/BIRC4. The cofactor is Mg(2+). Post-translationally, ubiquitination by XIAP/BIRC4 does not lead to proteasomal degradation. In terms of processing, autophosphorylated.

It is found in the cytoplasm. The protein resides in the nucleus. It catalyses the reaction L-seryl-[protein] + ATP = O-phospho-L-seryl-[protein] + ADP + H(+). The catalysed reaction is L-threonyl-[protein] + ATP = O-phospho-L-threonyl-[protein] + ADP + H(+). Its activity is regulated as follows. Activated by phosphorylation on Thr-524. Interacts with PKN2; the interaction activates PKN2 kinase activity in a MAP3K2-independent kinase activity. Its function is as follows. Component of a protein kinase signal transduction cascade. Regulates the JNK and ERK5 pathways by phosphorylating and activating MAP2K5 and MAP2K7. Plays a role in caveolae kiss-and-run dynamics. The sequence is that of Mitogen-activated protein kinase kinase kinase 2 (Map3k2) from Mus musculus (Mouse).